The following is a 307-amino-acid chain: Ubiquitin recognition factor in ER-associated degradation protein 1 (307 aa).

At Met1 the chain carries N-acetylmethionine. Phosphoserine is present on residues Ser129, Ser231, Ser245, Ser247, and Ser299. Disordered stretches follow at residues 230–255 (GSGNRLDGKKKGVEPSPSPIKPGDIK) and 288–307 (GRFIAFSGEGQSLRKKGRKP).

Belongs to the UFD1 family. In terms of assembly, heterodimer with NPLOC4, this heterodimer binds VCP and inhibits Golgi membrane fusion. Interacts with USP13. Interacts with ZFAND2B; probably through VCP.

The protein localises to the nucleus. It localises to the cytoplasm. It is found in the cytosol. Its pathway is protein degradation; proteasomal ubiquitin-dependent pathway. Its function is as follows. Essential component of the ubiquitin-dependent proteolytic pathway which degrades ubiquitin fusion proteins. The ternary complex containing UFD1, VCP and NPLOC4 binds ubiquitinated proteins and is necessary for the export of misfolded proteins from the ER to the cytoplasm, where they are degraded by the proteasome. The NPLOC4-UFD1-VCP complex regulates spindle disassembly at the end of mitosis and is necessary for the formation of a closed nuclear envelope. It may be involved in the development of some ectoderm-derived structures. Acts as a negative regulator of type I interferon production via the complex formed with VCP and NPLOC4, which binds to RIGI and recruits RNF125 to promote ubiquitination and degradation of RIGI. The polypeptide is Ubiquitin recognition factor in ER-associated degradation protein 1 (Mus musculus (Mouse)).